Reading from the N-terminus, the 556-residue chain is Arginine--tRNA ligase (556 aa).

Positions 132 to 142 (ANPTGDLHLGH) match the 'HIGH' region motif.

Belongs to the class-I aminoacyl-tRNA synthetase family. Monomer.

It localises to the cytoplasm. The enzyme catalyses tRNA(Arg) + L-arginine + ATP = L-arginyl-tRNA(Arg) + AMP + diphosphate. This Listeria monocytogenes serotype 4b (strain CLIP80459) protein is Arginine--tRNA ligase.